The primary structure comprises 65 residues: Adrenergic toxin rho-elapitoxin-Dp1b (65 aa).

4 disulfides stabilise this stretch: C3–C24, C17–C42, C46–C57, and C58–C63.

Belongs to the three-finger toxin family. Short-chain subfamily. Aminergic toxin sub-subfamily. As to expression, expressed by the venom gland.

Its subcellular location is the secreted. Functionally, highly potent on various alpha-adrenoceptors (ADRA) (subnanomolar affinity for ADRA1A). Order of potency is the following: ADRA1A (Ki=0.37 nM) &gt; ADRA1B (Ki=10.47 nM) &gt; ADRA1D (Ki=104.71 nM) &gt; ADRA2C (Ki=165.96 nM). Were also found to reversibly bind to muscarinic acetylcholine receptors (CHRM), but the affinity is much weaker (CHRM1, Ki=1778.28 nM; CHRM4, Ki=4466.84 nM; CHRM2, Ki=17782.79 nM). In Dendroaspis polylepis polylepis (Black mamba), this protein is Adrenergic toxin rho-elapitoxin-Dp1b.